Reading from the N-terminus, the 153-residue chain is Small ribosomal subunit protein uS9 (153 aa).

The tract at residues 122-153 (KKAGFLTRDPRSTERKKYGLKKARKAPQYSKR) is disordered. Residues 129–138 (RDPRSTERKK) show a composition bias toward basic and acidic residues. A compositionally biased stretch (basic residues) spans 139-153 (YGLKKARKAPQYSKR).

It belongs to the universal ribosomal protein uS9 family.

This Mycobacterium leprae (strain TN) protein is Small ribosomal subunit protein uS9 (rpsI).